Here is a 180-residue protein sequence, read N- to C-terminus: Nucleoid-associated protein At4g30620, chloroplastic (180 aa).

The N-terminal 48 residues, 1-48 (MASTATNTDFFKTLLSPFSNGNAAQRSSRQNIVWLNRKQSGNNNRSLR), are a transit peptide targeting the chloroplast. Positions 45–65 (RSLRVNGLFGGGKKDNKEDGQ) are disordered. The segment covering 56–65 (GKKDNKEDGQ) has biased composition (basic and acidic residues).

Belongs to the YbaB/EbfC family. In terms of assembly, homodimer. Binds to the translation initiation factors TIF3E1.

The protein localises to the plastid. It localises to the chloroplast. In terms of biological role, binds to DNA and alters its conformation. May be involved in regulation of gene expression, nucleoid organization and DNA protection. The polypeptide is Nucleoid-associated protein At4g30620, chloroplastic (Arabidopsis thaliana (Mouse-ear cress)).